A 99-amino-acid chain; its full sequence is A-type ATP synthase subunit F (99 aa).

This sequence belongs to the V-ATPase F subunit family. Has multiple subunits with at least A(3), B(3), C, D, E, F, H, I and proteolipid K(x).

It is found in the cell membrane. Its function is as follows. Component of the A-type ATP synthase that produces ATP from ADP in the presence of a proton gradient across the membrane. The polypeptide is A-type ATP synthase subunit F (Methanococcus maripaludis (strain DSM 14266 / JCM 13030 / NBRC 101832 / S2 / LL)).